The following is a 226-amino-acid chain: MDELKKLAGVYAAGFVEDGMVVGLGTGSTAYFFVEEIGRRIKEEGLSVVGVTTSTQTTKQAEGLGIPLKSVDDIDSIDVTVDGADEVDPQLNGIKGGGGALLMEKIVATPTKKYIWVVDESKMVDQLGAFKLPVEVVQYGADRLYLDFESKGYKPSFRVTEQGDRFVTDMKNFIIDLDLGKINNPVALGDELKAMTGVVEHGLFNGMVNKVIVAGKDGVKIVEVKD.

Substrate is bound by residues 26 to 29 (TGST), 82 to 85 (DGAD), and 95 to 98 (KGGG). E104 (proton acceptor) is an active-site residue. K122 serves as a coordination point for substrate.

Belongs to the ribose 5-phosphate isomerase family. Homodimer.

The enzyme catalyses aldehydo-D-ribose 5-phosphate = D-ribulose 5-phosphate. It participates in carbohydrate degradation; pentose phosphate pathway; D-ribose 5-phosphate from D-ribulose 5-phosphate (non-oxidative stage): step 1/1. Functionally, catalyzes the reversible conversion of ribose-5-phosphate to ribulose 5-phosphate. The sequence is that of Ribose-5-phosphate isomerase A from Streptococcus thermophilus (strain ATCC BAA-250 / LMG 18311).